We begin with the raw amino-acid sequence, 87 residues long: U3-theraphotoxin-Cg1c (87 aa).

Residues 1–23 (MRTFTLIAILTCAVLVIFHVSAA) form the signal peptide. Positions 24–51 (EELEAQDVIQPEDIFTGVATLEEDRIFE) are excised as a propeptide. Intrachain disulfides connect C52–C65, C56–C79, and C73–C84.

This sequence belongs to the neurotoxin 12 (Hwtx-2) family. 03 (juruin) subfamily. As to expression, expressed by the venom gland.

It is found in the secreted. Functionally, probable ion channel inhibitor. The chain is U3-theraphotoxin-Cg1c from Chilobrachys guangxiensis (Chinese earth tiger tarantula).